The sequence spans 126 residues: Holo-[acyl-carrier-protein] synthase (126 aa).

Asp9 and Glu58 together coordinate Mg(2+).

This sequence belongs to the P-Pant transferase superfamily. AcpS family. Requires Mg(2+) as cofactor.

It localises to the cytoplasm. The enzyme catalyses apo-[ACP] + CoA = holo-[ACP] + adenosine 3',5'-bisphosphate + H(+). In terms of biological role, transfers the 4'-phosphopantetheine moiety from coenzyme A to a Ser of acyl-carrier-protein. The protein is Holo-[acyl-carrier-protein] synthase of Klebsiella pneumoniae (strain 342).